A 620-amino-acid chain; its full sequence is Chaperone protein HscA homolog (620 aa).

This sequence belongs to the heat shock protein 70 family.

Functionally, chaperone involved in the maturation of iron-sulfur cluster-containing proteins. Has a low intrinsic ATPase activity which is markedly stimulated by HscB. The chain is Chaperone protein HscA homolog from Pasteurella multocida (strain Pm70).